The sequence spans 668 residues: DNA damage-responsive serine/threonine-protein kinase RqkA (668 aa).

In terms of domain architecture, Protein kinase spans 13-272 (YELLALLGEG…SGAALAHLWA (260 aa)). Residues 19–27 (LGEGGSAQV) and Lys42 each bind ATP. Catalysis depends on Asp137, which acts as the Proton acceptor.

It belongs to the protein kinase superfamily. Ser/Thr protein kinase family. It depends on pyrroloquinoline quinone as a cofactor. In terms of processing, autophosphorylated.

The catalysed reaction is L-seryl-[protein] + ATP = O-phospho-L-seryl-[protein] + ADP + H(+). It catalyses the reaction L-threonyl-[protein] + ATP = O-phospho-L-threonyl-[protein] + ADP + H(+). With respect to regulation, autokinase activity is stimulated by DNA damage. Stimulated by PQQ and DNA ends in vitro. In terms of biological role, plays an important role in radiation resistance and DNA double-strand break (DSB) repair. Involved in transcriptional regulation of genes important for bacterial stress response. Phosphorylates PprA in vitro. In Deinococcus radiodurans (strain ATCC 13939 / DSM 20539 / JCM 16871 / CCUG 27074 / LMG 4051 / NBRC 15346 / NCIMB 9279 / VKM B-1422 / R1), this protein is DNA damage-responsive serine/threonine-protein kinase RqkA (rqkA).